Reading from the N-terminus, the 690-residue chain is Eukaryotic translation initiation factor 3 subunit B (690 aa).

The interval 1–37 (MAKKKSEEQSSADANDSDYQEEPNFEDPPGFVDNISD) is disordered. The span at 15-25 (NDSDYQEEPNF) shows a compositional bias: acidic residues. One can recognise an RRM domain in the interval 57 to 141 (SVVVVDNIPK…HTFAVNLFTD (85 aa)). 5 WD repeats span residues 207-246 (TRER…KIQK), 293-331 (DGMS…LLDL), 334-369 (IKIP…TLME), 442-484 (EIRE…KPSL), and 530-575 (PDHF…IKRT). Residues 595-645 (EEKQKEIKKNLKKYYAAFEQKDRLRLTRASKELLEKRSQLRETFMEYRNKR) adopt a coiled-coil conformation.

This sequence belongs to the eIF-3 subunit B family. As to quaternary structure, component of the eukaryotic translation initiation factor 3 (eIF-3) complex. The eIF-3 complex interacts with pix. Interacts with mxt.

It localises to the cytoplasm. Its function is as follows. RNA-binding component of the eukaryotic translation initiation factor 3 (eIF-3) complex, which is involved in protein synthesis of a specialized repertoire of mRNAs and, together with other initiation factors, stimulates binding of mRNA and methionyl-tRNAi to the 40S ribosome. The eIF-3 complex specifically targets and initiates translation of a subset of mRNAs involved in cell proliferation. The polypeptide is Eukaryotic translation initiation factor 3 subunit B (Drosophila sechellia (Fruit fly)).